The sequence spans 346 residues: Leucine zipper protein 2 (346 aa).

Residues 1 to 17 form the signal peptide; sequence MKFIGAVYLLFLLPALS. 2 N-linked (GlcNAc...) asparagine glycosylation sites follow: asparagine 19 and asparagine 131. The stretch at 41–209 forms a coiled coil; the sequence is RHLSKTSKEL…QLKALKDTVH (169 aa). The segment at 162 to 190 is leucine-zipper; it reads LRYGKKDLIFKGQQLMDLENKLKVAKDEL. 2 N-linked (GlcNAc...) asparagine glycosylation sites follow: asparagine 241 and asparagine 296. Positions 271 to 346 are disordered; sequence SAVMRRESTG…LKKTQSDKHN (76 aa). A compositionally biased stretch (polar residues) spans 293–324; sequence CSHNQTESSSVMKKTFGHSQSKTPEQNGQGQA. Residues 326 to 346 show a composition bias toward basic and acidic residues; sequence TAEESVKTDGELKKTQSDKHN.

It is found in the secreted. The polypeptide is Leucine zipper protein 2 (luzp2) (Danio rerio (Zebrafish)).